The following is a 599-amino-acid chain: BICD family-like cargo adapter 1 (599 aa).

A disordered region spans residues 1-27; it reads MELPISFLSDSSRPAASSERGDQAALG. Positions 76–80 match the CC1 box motif; it reads AARLG. The stretch at 80 to 341 forms a coiled coil; that stretch reads GKALLERNQD…WEAHCQVRSL (262 aa). The disordered stretch occupies residues 352–375; sequence DSAVSTDSSMDESSETSSAKDVPA. A coiled-coil region spans residues 405 to 536; that stretch reads EDDGLEEQIK…LEAWQDDMHR (132 aa).

The protein belongs to the BICDR family. Part of a tripartite complex with dynein and dynactin, acts an adapter linking the dynein motor complex and dynactin. Interacts with KIF1C. Interacts with RAB6A and RAB6B; interaction is specific to Rab6.

It is found in the cytoplasm. Its subcellular location is the cytoskeleton. The protein localises to the microtubule organizing center. It localises to the centrosome. Its function is as follows. Acts as an adapter protein linking the dynein motor complex to various cargos and converts dynein from a non-processive to a highly processive motor in the presence of dynactin. Facilitates the interaction between dynein and dynactin and activates dynein processivity (the ability to move along a microtubule for a long distance without falling off the track). Predominantly recruits 2 dyneins, which increases both the force and speed of the microtubule motor. Component of secretory vesicle machinery in developing neurons that acts as a regulator of neurite outgrowth. Regulates the secretory vesicle transport by controlling the accumulation of Rab6-containing secretory vesicles in the pericentrosomal region restricting anterograde secretory transport during the early phase of neuronal differentiation, thereby inhibiting neuritogenesis. The chain is BICD family-like cargo adapter 1 (bicdl1) from Xenopus tropicalis (Western clawed frog).